The following is a 294-amino-acid chain: 33 kDa chaperonin (294 aa).

Intrachain disulfides connect cysteine 239–cysteine 241 and cysteine 272–cysteine 275.

The protein belongs to the HSP33 family. In terms of processing, under oxidizing conditions two disulfide bonds are formed involving the reactive cysteines. Under reducing conditions zinc is bound to the reactive cysteines and the protein is inactive.

The protein localises to the cytoplasm. In terms of biological role, redox regulated molecular chaperone. Protects both thermally unfolding and oxidatively damaged proteins from irreversible aggregation. Plays an important role in the bacterial defense system toward oxidative stress. The polypeptide is 33 kDa chaperonin (Lacticaseibacillus casei (strain BL23) (Lactobacillus casei)).